The chain runs to 366 residues: Transcription factor MYB28 (366 aa).

2 consecutive HTH myb-type domains span residues 9–61 (GEGL…TNYL) and 62–116 (KPEI…KKRL). 2 consecutive DNA-binding regions (H-T-H motif) follow at residues 37 to 61 (WRDI…TNYL) and 89 to 112 (WSVI…NTHL). Residues 124–170 (VTHKPLASSSNPTVDENLNSPNASSSDKQYSRSSSMPFLSRPPPSSC) form a disordered region. Polar residues predominate over residues 130 to 146 (ASSSNPTVDENLNSPNA). Low complexity predominate over residues 147 to 158 (SSSDKQYSRSSS).

Can form complexes with MYC2, MYC3 or MYC4. Expressed in generative organs, mature leaves and trichomes.

It localises to the nucleus. Its function is as follows. Major regulator of short-chained aliphatic glucosinolates (GLSs) biosynthesis. Together with MYB29/HAG3 and MYB76/HAG2, promotes aliphatic glucosinolate biosynthesis but represses indolic glucosinolate biosynthesis. Prevents insect performance (e.g. lepidopteran insect Mamestra brassicae and Spodoptera exigua) by promoting glucosinolates. The protein is Transcription factor MYB28 (MYB28) of Arabidopsis thaliana (Mouse-ear cress).